The sequence spans 689 residues: Glycine--tRNA ligase beta subunit (689 aa).

It belongs to the class-II aminoacyl-tRNA synthetase family. Tetramer of two alpha and two beta subunits.

The protein resides in the cytoplasm. It carries out the reaction tRNA(Gly) + glycine + ATP = glycyl-tRNA(Gly) + AMP + diphosphate. This chain is Glycine--tRNA ligase beta subunit, found in Yersinia enterocolitica serotype O:8 / biotype 1B (strain NCTC 13174 / 8081).